Reading from the N-terminus, the 988-residue chain is Voltage-gated delayed rectifier potassium channel KCNH5 (988 aa).

Residues 1–217 are Cytoplasmic-facing; that stretch reads MPGGKRGLVA…LHYCAFKTTW (217 aa). A PAS domain is found at 14 to 86; sequence TFLENIVRRS…TIEKVRQTFD (73 aa). Positions 91-143 constitute a PAC domain; the sequence is NCFEVLLYKKNRTPVWFYMQIAPIRNEHEKVVLFLCTFKDITLFKQPIEDDST. Residues 218–238 form a helical membrane-spanning segment; sequence DWVILILTFYTAIMVPYNVSF. The Extracellular segment spans residues 239 to 243; it reads KTKQN. Residues 244–264 traverse the membrane as a helical segment; that stretch reads NIAWLVLDSVVDVIFLVDIVL. Residues 265–291 lie on the Cytoplasmic side of the membrane; the sequence is NFHTTFVGPGGEVISDPKLIRMNYLKT. A helical transmembrane segment spans residues 292–312; it reads WFVIDLLSCLPYDIINAFENV. The Extracellular portion of the chain corresponds to 313-319; that stretch reads DEGISSL. A helical; Voltage-sensor transmembrane segment spans residues 320-340; sequence FSSLKVVRLLRLGRVARKLDH. Topologically, residues 341–346 are cytoplasmic; the sequence is YLEYGA. Residues 347–367 form a helical membrane-spanning segment; sequence AVLVLLVCVFGLVAHWLACIW. Residues 368 to 419 are Extracellular-facing; sequence YSIGDYEVIDEVTNTIQIDSWLYQLALSIGTPYRYNTSAGIWEGGPSKDSLY. A glycan (N-linked (GlcNAc...) asparagine) is linked at Asn403. An intramembrane region (pore-forming) is located at residues 420-440; that stretch reads VSSLYFTMTSLTTIGFGNIAP. A Selectivity filter motif is present at residues 432 to 437; the sequence is TIGFGN. The Extracellular segment spans residues 441–446; the sequence is TTDVEK. The helical transmembrane segment at 447–467 threads the bilayer; sequence MFSVAMMMVGSLLYATIFGNV. Residues 468-988 are Cytoplasmic-facing; it reads TTIFQQMYAN…PESDKDEINF (521 aa). Residue 550 to 668 coordinates a nucleoside 3',5'-cyclic phosphate; that stretch reads AFRLASDGCL…SFSRNLTLTC (119 aa). The calmodulin-binding stretch occupies residues 704-715; the sequence is HPVRKLFQKFKQ. The tract at residues 721-741 is disordered; that stretch reads IQGSAQSDPERSQLQVESRPL. Over residues 723 to 741 the composition is skewed to polar residues; the sequence is GSAQSDPERSQLQVESRPL. Lys785 is covalently cross-linked (Glycyl lysine isopeptide (Lys-Gly) (interchain with G-Cter in ubiquitin)). A disordered region spans residues 838 to 893; it reads GLLSEDPKGSDSENSVTKNPLRKTDSCDSGITKSDLRLDKAGEARSPLEHSPSQAD. Residues 871–885 are compositionally biased toward basic and acidic residues; it reads SDLRLDKAGEARSPL. Ser883 is modified (phosphoserine). The CAD (involved in subunit assembly) stretch occupies residues 909–948; it reads TLQEVKHELKEDIQLLSCRMTALEKQVAEILKLLSEKSVP.

It belongs to the potassium channel family. H (Eag) (TC 1.A.1.20) subfamily. Kv10.2/KCNH5 sub-subfamily. Homotetramer. The potassium channel is probably composed of a homo- or heterotetrameric complex of pore-forming alpha subunits that can associate with modulating beta subunits. Heteromultimer with KCNH1/EAG.

Its subcellular location is the membrane. It catalyses the reaction K(+)(in) = K(+)(out). In terms of biological role, pore-forming (alpha) subunit of a voltage-gated delayed rectifier potassium channel that mediates outward-rectifying potassium currents which, on depolarization, reaches a steady-state level and do not inactivate. The kinetic is characterized by a slow activation time course and a small voltage dependence of the activation time constants, therefore, starts to open at more negative voltages. The activation kinetics depend on the prepulse potential and external divalent cation concentration. The time course of activation is biphasic with a fast and a slowly activating current component. With negative prepulses, the current activation is delayed and slowed down several fold, whereas more positive prepulses speed up activation, therefore the activation rate depends on holding potential. The chain is Voltage-gated delayed rectifier potassium channel KCNH5 from Mus musculus (Mouse).